We begin with the raw amino-acid sequence, 91 residues long: DNA-binding protein HU (91 aa).

Belongs to the bacterial histone-like protein family.

Histone-like DNA-binding protein which is capable of wrapping DNA to stabilize it, and thus to prevent its denaturation under extreme environmental conditions. Also seems to act as a fortuitous virulence factor in delayed sequelae by binding to heparan sulfate-proteoglycans in the extracellular matrix of target organs and acting as a nidus for in situ immune complex formation. In Streptococcus mutans serotype c (strain ATCC 700610 / UA159), this protein is DNA-binding protein HU (hup).